A 576-amino-acid polypeptide reads, in one-letter code: MSLGARGYRRCDTLADMRRRWYNNGPFQTLRMLEESSSEVTSSSALGLPPAMVMSPESLASPEIGGLELWGYDDGITYSMAQSLGTCTMEQQQPQPQQQPQQTQPLPSMPLPMPPTTPKSENESMSSGREELSPASSVNGCSTDGEARRQKKGPAPRQQEELCLVCGDRASGYHYNALTCEGCKGFFRRSVTKNAVYICKFGHACEMDIYMRRKCQECRLKKCLAVGMRPECVVPENQCAMKRKEKKAQREKDKLPVSTTTVDDHMPPIMQCDPPPPEAARILECVQHEVVPRFLNEKLMEQNRLKNVPPLTANQKSLIARLVWYQEGYEQPSEEDLKRVTQSDEDDEDSDMPFRQITEMTILTVQLIVEFAKGLPGFAKISQSDQITLLKACSSEVMMLRVARRYDAATDSVLFANNQAYTRDNYRKAGMAYVIEDLLHFCRCMYSMMMDNVHYALLTAIVIFSDRPGLEQPLLVEEIQRYYLNTLRVYILNQNSASPRGAVIFGEILGILTEIRTLGMQNSNMCISLKLKNRKLPPFLEEIWDVADVATTATPVAAEAPAPLAPAPPARPPATV.

The modulating stretch occupies residues 1 to 162; that stretch reads MSLGARGYRR…GPAPRQQEEL (162 aa). The segment at 87–154 is disordered; the sequence is CTMEQQQPQP…GEARRQKKGP (68 aa). Low complexity predominate over residues 91–106; it reads QQQPQPQQQPQQTQPL. Over residues 107–117 the composition is skewed to pro residues; the sequence is PSMPLPMPPTT. 2 NR C4-type zinc fingers span residues 163–183 and 199–223; these read CLVCGDRASGYHYNALTCEGC and CKFGHACEMDIYMRRKCQECRLKKC. The segment at residues 163–235 is a DNA-binding region (nuclear receptor); it reads CLVCGDRASG…VGMRPECVVP (73 aa). The disordered stretch occupies residues 245–269; that stretch reads EKKAQREKDKLPVSTTTVDDHMPPI. Residues 314–548 enclose the NR LBD domain; that stretch reads NQKSLIARLV…FLEEIWDVAD (235 aa).

Belongs to the nuclear hormone receptor family. NR1 subfamily.

The protein resides in the nucleus. Its function is as follows. Receptor for ecdysone. Binds to ecdysone response elements (ECRES). This is Ecdysone receptor (EcR) from Heliothis virescens (Tobacco budworm moth).